Consider the following 2295-residue polypeptide: Protein DOP1B (2295 aa).

Phosphoserine is present on residues S556 and S597. Disordered regions lie at residues 574–599, 651–684, 1034–1059, and 1092–1136; these read AGDE…SSPE, GEEN…DPKP, CKEA…QFTT, and DLPD…LQDL. A compositionally biased stretch (polar residues) spans 1111-1131; it reads ADTSSGHTDSENTSTFSSPSH. S1167 is subject to Phosphoserine.

This sequence belongs to the DOP1 family. As to quaternary structure, homooligomer. Heterotrimer with ATP9A and MON2; this interaction is retromer-independent. Interacts with SNX3. Expressed in liver, heart and brain.

It localises to the early endosome membrane. It is found in the golgi apparatus membrane. May play a role in regulating membrane trafficking of cargo proteins. Together with ATP9A and MON2, regulates SNX3 retromer-mediated endosomal sorting of WLS away from lysosomal degradation. This is Protein DOP1B (Dop1b) from Mus musculus (Mouse).